Consider the following 560-residue polypeptide: MSYKQQYAQVLHDVIGDALSQEEIEQLIEQPKHEDHGDLAFPCFQLAKAFRKAPMMIATELAEKIDNPLFSNVQAAGPYVNVFLNREVVSREIIKRVLEEQQAYGSSELNGKTIVTDFSSPNIAKPFSMGHLRSTVIGNALNQISRKKGYEVVGINHLGDWGTQFGKLMVAYNMWGKEEDVRSEPIKELLKLYVRFHEEAEENPGLEDEGRAWFKKLEQGDEQATALWTWFREVSLVEFSRVYEMLGVSFDSLNGEAFYNDKMQHVIDLLEEKDLLVESEGAMVVDLEAEGMPPALIKKKDGATLYATRDLAAAVYRLETYGFEQAFYVVGGEQALHFKQLFAVLKKLGFENVDGMHHVPFGLIMKDGKKMSTRKGRIVLLEEVLQDAINVAKQNIAEKNPNLANAEQTAREVGVGAVIFHDLKNERMNNIEFDLEQMLKFEGETGPYVQYTNARANSLLRKGAYDGSAFNGSADDYSWGVVSMLNQFSAVIDRAFTRREPSIISRYVLDLAQSFNKYYGQVRVLEDDAEKQSRLALVKSVTIVLTEGLRLLGVGAPEEM.

A 'HIGH' region motif is present at residues 121-131 (PNIAKPFSMGH).

Belongs to the class-I aminoacyl-tRNA synthetase family. In terms of assembly, monomer.

Its subcellular location is the cytoplasm. It catalyses the reaction tRNA(Arg) + L-arginine + ATP = L-arginyl-tRNA(Arg) + AMP + diphosphate. This is Arginine--tRNA ligase from Exiguobacterium sibiricum (strain DSM 17290 / CCUG 55495 / CIP 109462 / JCM 13490 / 255-15).